Here is a 252-residue protein sequence, read N- to C-terminus: Phosphomannomutase (252 aa).

D13 (nucleophile) is an active-site residue. The Mg(2+) site is built by D13 and D15. D15 serves as the catalytic Proton donor/acceptor. Residues R22, R124, R135, R142, S180, and D182 each coordinate alpha-D-mannose 1-phosphate. Residues D208, Y220, and T225 each contribute to the Mg(2+) site.

Belongs to the eukaryotic PMM family. Homodimer. It depends on Mg(2+) as a cofactor.

The protein localises to the cytoplasm. The catalysed reaction is alpha-D-mannose 1-phosphate = D-mannose 6-phosphate. Its pathway is nucleotide-sugar biosynthesis; GDP-alpha-D-mannose biosynthesis; alpha-D-mannose 1-phosphate from D-fructose 6-phosphate: step 2/2. Its function is as follows. Catalyzes the interconversion of mannose-6-phosphate to mannose-1-phosphate, the precursor for the synthesis of GDP-mannose. GDP-mannose is an essential sugar nucleotide for the synthesis of D-mannose-containing cell wall polysaccharides (galactomannans and glucomannans), glycolipids, glycoproteins and the antioxidant L-ascorbate. Can complement the yeast temperature-sensitive mutant sec53-6. This Solanum lycopersicum (Tomato) protein is Phosphomannomutase.